Reading from the N-terminus, the 440-residue chain is L-seryl-tRNA(Sec) selenium transferase (440 aa).

Lysine 282 carries the post-translational modification N6-(pyridoxal phosphate)lysine.

It belongs to the SelA family. Pyridoxal 5'-phosphate is required as a cofactor.

It localises to the cytoplasm. The enzyme catalyses L-seryl-tRNA(Sec) + selenophosphate + H(+) = L-selenocysteinyl-tRNA(Sec) + phosphate. It participates in aminoacyl-tRNA biosynthesis; selenocysteinyl-tRNA(Sec) biosynthesis; selenocysteinyl-tRNA(Sec) from L-seryl-tRNA(Sec) (bacterial route): step 1/1. Converts seryl-tRNA(Sec) to selenocysteinyl-tRNA(Sec) required for selenoprotein biosynthesis. The sequence is that of L-seryl-tRNA(Sec) selenium transferase from Campylobacter jejuni subsp. jejuni serotype O:2 (strain ATCC 700819 / NCTC 11168).